We begin with the raw amino-acid sequence, 97 residues long: Peptide YY-A (97 aa).

An N-terminal signal peptide occupies residues 1 to 28; the sequence is MAVMLKPWTVVATVLICVLLCLGTFVDA. Tyrosine 64 carries the post-translational modification Tyrosine amide. Residues 68 to 97 constitute a propeptide, C-terminal extension; that stretch reads STSEDVMAELLFGDDTEHKQRSRYDDSFMW.

It belongs to the NPY family. Mainly expressed in brainstem neurons, and in the telencephalon. Also expressed in intestinal endocrine cells.

The protein localises to the secreted. This chain is Peptide YY-A (pyya), found in Danio rerio (Zebrafish).